Here is a 262-residue protein sequence, read N- to C-terminus: Acyl-[acyl-carrier-protein]--UDP-N-acetylglucosamine O-acyltransferase (262 aa).

It belongs to the transferase hexapeptide repeat family. LpxA subfamily. Homotrimer.

The protein resides in the cytoplasm. It catalyses the reaction a (3R)-hydroxyacyl-[ACP] + UDP-N-acetyl-alpha-D-glucosamine = a UDP-3-O-[(3R)-3-hydroxyacyl]-N-acetyl-alpha-D-glucosamine + holo-[ACP]. It functions in the pathway glycolipid biosynthesis; lipid IV(A) biosynthesis; lipid IV(A) from (3R)-3-hydroxytetradecanoyl-[acyl-carrier-protein] and UDP-N-acetyl-alpha-D-glucosamine: step 1/6. Involved in the biosynthesis of lipid A, a phosphorylated glycolipid that anchors the lipopolysaccharide to the outer membrane of the cell. This is Acyl-[acyl-carrier-protein]--UDP-N-acetylglucosamine O-acyltransferase from Escherichia coli O157:H7.